We begin with the raw amino-acid sequence, 226 residues long: Flagellar L-ring protein (226 aa).

The signal sequence occupies residues 1–15; it reads MKRLAVSILCLALAG. Cys-16 carries N-palmitoyl cysteine lipidation. Cys-16 carries the S-diacylglycerol cysteine lipid modification.

It belongs to the FlgH family. As to quaternary structure, the basal body constitutes a major portion of the flagellar organelle and consists of four rings (L,P,S, and M) mounted on a central rod.

It is found in the cell outer membrane. The protein resides in the bacterial flagellum basal body. In terms of biological role, assembles around the rod to form the L-ring and probably protects the motor/basal body from shearing forces during rotation. This is Flagellar L-ring protein from Geobacter metallireducens (strain ATCC 53774 / DSM 7210 / GS-15).